A 485-amino-acid chain; its full sequence is Polyol:NADP oxidoreductase (485 aa).

Belongs to the mannitol dehydrogenase family.

Its subcellular location is the cytoplasm. In Gluconobacter oxydans (strain 621H) (Gluconobacter suboxydans), this protein is Polyol:NADP oxidoreductase (por).